A 210-amino-acid chain; its full sequence is Thymidylate kinase (210 aa).

9–16 (GPEGAGKT) serves as a coordination point for ATP.

Belongs to the thymidylate kinase family.

The catalysed reaction is dTMP + ATP = dTDP + ADP. In terms of biological role, phosphorylation of dTMP to form dTDP in both de novo and salvage pathways of dTTP synthesis. In Thermomicrobium roseum (strain ATCC 27502 / DSM 5159 / P-2), this protein is Thymidylate kinase.